The following is a 263-amino-acid chain: Mannose-specific lectin 2 (263 aa).

A signal peptide spans 1–24 (MAKSLVLSSLLLALLLAAPLASLA). Bulb-type lectin domains lie at 26–136 (NNVL…APNR) and 150–260 (RNVL…SSAS). Disulfide bonds link Cys54/Cys76 and Cys178/Cys203.

As to quaternary structure, heterotetramer of 2 domain 1 and 2 domain 2 chains arranged as a dimer of domain 1/domain 2 heterodimers.

Mannose-specific lectin. Has weak agglutinating activity towards trypsin-treated erythrocytes from rabbit but not from human. The chain is Mannose-specific lectin 2 from Crocus vernus (Dutch crocus).